A 450-amino-acid chain; its full sequence is C4-dicarboxylate transport protein (450 aa).

Helical transmembrane passes span 25–45 (VVFA…YGAA), 56–76 (LIKM…IASM), 90–110 (MAYF…VANV), 162–182 (ILQV…VGDA), 200–220 (LVNI…AFTI), 234–254 (LVLT…GAVA), 319–339 (IYMT…LTLG), and 367–387 (AATL…ILGV).

This sequence belongs to the dicarboxylate/amino acid:cation symporter (DAACS) (TC 2.A.23) family.

Its subcellular location is the cell inner membrane. Responsible for the transport of dicarboxylates such as succinate, fumarate, and malate from the periplasm across the membrane. The polypeptide is C4-dicarboxylate transport protein (Acidovorax ebreus (strain TPSY) (Diaphorobacter sp. (strain TPSY))).